We begin with the raw amino-acid sequence, 81 residues long: Cytochrome c oxidase subunit NDUFA4 (81 aa).

The Mitochondrial matrix segment spans residues 1 to 14; that stretch reads MLRQIIGQAKKHPS. At lysine 10 the chain carries N6-acetyllysine. The chain crosses the membrane as a helical span at residues 15 to 37; the sequence is LIPLFVFIGTGATGATLYLLRLA. At 38–81 the chain is on the mitochondrial intermembrane side; the sequence is LFNPDVCWDRNNPEPWNKLGPNDQYKFYSVNVDYSKLKKERPDF. At serine 66 the chain carries Phosphoserine.

This sequence belongs to the complex IV NDUFA4 subunit family. In terms of assembly, component of the cytochrome c oxidase (complex IV, CIV), a multisubunit enzyme composed of 14 subunits. The complex is composed of a catalytic core of 3 subunits MT-CO1, MT-CO2 and MT-CO3, encoded in the mitochondrial DNA, and 11 supernumerary subunits COX4I1 (or COX4I2), COX5A, COX5B, COX6A1 (or COX6A2), COX6B1 (or COX6B2), COX6C, COX7A2 (or COX7A1), COX7B, COX7C, COX8A and NDUFA4, which are encoded in the nuclear genome. The complex exists as a monomer or a dimer and forms supercomplexes (SCs) in the inner mitochondrial membrane with NADH-ubiquinone oxidoreductase (complex I, CI) and ubiquinol-cytochrome c oxidoreductase (cytochrome b-c1 complex, complex III, CIII), resulting in different assemblies (supercomplex SCI(1)III(2)IV(1) and megacomplex MCI(2)III(2)IV(2)). Interacts with RAB5IF. Interacts with FLVCR2; this interaction occurs in the absence of heme and is disrupted upon heme binding.

The protein localises to the mitochondrion inner membrane. Its function is as follows. Component of the cytochrome c oxidase, the last enzyme in the mitochondrial electron transport chain which drives oxidative phosphorylation. The respiratory chain contains 3 multisubunit complexes succinate dehydrogenase (complex II, CII), ubiquinol-cytochrome c oxidoreductase (cytochrome b-c1 complex, complex III, CIII) and cytochrome c oxidase (complex IV, CIV), that cooperate to transfer electrons derived from NADH and succinate to molecular oxygen, creating an electrochemical gradient over the inner membrane that drives transmembrane transport and the ATP synthase. Cytochrome c oxidase is the component of the respiratory chain that catalyzes the reduction of oxygen to water. Electrons originating from reduced cytochrome c in the intermembrane space (IMS) are transferred via the dinuclear copper A center (CU(A)) of subunit 2 and heme A of subunit 1 to the active site in subunit 1, a binuclear center (BNC) formed by heme A3 and copper B (CU(B)). The BNC reduces molecular oxygen to 2 water molecules unsing 4 electrons from cytochrome c in the IMS and 4 protons from the mitochondrial matrix. NDUFA4 is required for complex IV maintenance. In Homo sapiens (Human), this protein is Cytochrome c oxidase subunit NDUFA4 (NDUFA4).